The primary structure comprises 601 residues: Probable inactive receptor kinase At1g27190 (601 aa).

The first 24 residues, 1–24 (MKKIFITLLWLLFISSFLCSSSSA), serve as a signal peptide directing secretion. A glycan (N-linked (GlcNAc...) asparagine) is linked at N52. LRR repeat units lie at residues 73-95 (RIIS…LKLC), 97-119 (SLQS…ICSW), 122-144 (YLVT…IVEC), 146-169 (FLNA…SRLD), and 170-192 (RLRR…LARF). A helical transmembrane segment spans residues 221 to 241 (IIIVAGVLGAVGSLCVGLVIF). Residue T298 is modified to Phosphothreonine. Residues 301–586 (FSSGNIDVSS…KNMADKHGVS (286 aa)) enclose the Protein kinase domain. Residues 307–315 (DVSSRTGVS) and K329 each bind ATP. At S383 the chain carries Phosphoserine. At T399 the chain carries Phosphothreonine. Y476 is subject to Phosphotyrosine. S478 carries the post-translational modification Phosphoserine. T479 bears the Phosphothreonine mark. A phosphoserine mark is found at S483 and S586.

It belongs to the protein kinase superfamily. Ser/Thr protein kinase family.

The protein localises to the membrane. In Arabidopsis thaliana (Mouse-ear cress), this protein is Probable inactive receptor kinase At1g27190.